A 565-amino-acid polypeptide reads, in one-letter code: Ubiquitin carboxyl-terminal hydrolase 21 (565 aa).

Over residues 1–14 the composition is skewed to basic and acidic residues; sequence MPQASEHRLGRTRE. The segment at 1-103 is disordered; that stretch reads MPQASEHRLG…PPPTVALPLP (103 aa). Pro residues predominate over residues 48-57; sequence MLRPLPPRPG. Residues 58 to 70 are compositionally biased toward basic and acidic residues; it reads LPDERLKKLELGR. Positions 134 to 152 match the Nuclear export signal motif; that stretch reads ELGAALSRLALRPEPPTLR. Residues 212–558 form the USP domain; the sequence is VGLRNLGNTC…EGYVLFYQLM (347 aa). Residue Cys221 is the Nucleophile of the active site. Positions 384, 387, 437, and 440 each coordinate Zn(2+). Catalysis depends on His518, which acts as the Proton acceptor.

It belongs to the peptidase C19 family. USP21 subfamily. In terms of assembly, interacts with BEND3. In terms of tissue distribution, highly expressed in heart, pancreas and skeletal muscle. Also expressed in brain, placenta, liver and kidney, and at very low level in lung.

It is found in the cytoplasm. The protein resides in the nucleus. It catalyses the reaction Thiol-dependent hydrolysis of ester, thioester, amide, peptide and isopeptide bonds formed by the C-terminal Gly of ubiquitin (a 76-residue protein attached to proteins as an intracellular targeting signal).. Its function is as follows. Deubiquitinates histone H2A, a specific tag for epigenetic transcriptional repression, thereby acting as a coactivator. Deubiquitination of histone H2A releaves the repression of di- and trimethylation of histone H3 at 'Lys-4', resulting in regulation of transcriptional initiation. Regulates gene expression via histone H2A deubiquitination. Deubiquitinates BAZ2A/TIP5 leading to its stabilization. Also capable of removing NEDD8 from NEDD8 conjugates but has no effect on Sentrin-1 conjugates. Also acts as a negative regulator of the ribosome quality control (RQC) by mediating deubiquitination of 40S ribosomal proteins RPS10/eS10 and RPS20/uS10, thereby antagonizing ZNF598-mediated 40S ubiquitination. The polypeptide is Ubiquitin carboxyl-terminal hydrolase 21 (Homo sapiens (Human)).